The primary structure comprises 150 residues: MSKVILKIKRLPHAQDLPLPSYATPHSSGLDLRAAIEKPLKIKPFERVLIPTGLILEIPEGYEGQVRPRSGLAWKKGLTVLNAPGTIDADYRGEVKVILVNLGNEEVVIERGERIAQLVIAPVQRVEVVEVEEVSQTQRGEGGFGSTGTK.

Residues 69 to 71, asparagine 82, 86 to 88, and lysine 96 contribute to the substrate site; these read RSG and TID.

The protein belongs to the dUTPase family. Mg(2+) is required as a cofactor.

It catalyses the reaction dUTP + H2O = dUMP + diphosphate + H(+). The protein operates within pyrimidine metabolism; dUMP biosynthesis; dUMP from dCTP (dUTP route): step 2/2. This enzyme is involved in nucleotide metabolism: it produces dUMP, the immediate precursor of thymidine nucleotides and it decreases the intracellular concentration of dUTP so that uracil cannot be incorporated into DNA. This Aquifex aeolicus (strain VF5) protein is Deoxyuridine 5'-triphosphate nucleotidohydrolase.